Reading from the N-terminus, the 393-residue chain is Prokineticin receptor 1 (393 aa).

Residues 1-62 lie on the Extracellular side of the membrane; it reads METTVGTLGE…TNSRTFFAAK (62 aa). The N-linked (GlcNAc...) asparagine glycan is linked to N11. The chain crosses the membrane as a helical span at residues 63 to 83; it reads IVIGMALVGIMLVCGIGNFIF. The Cytoplasmic portion of the chain corresponds to 84-98; that stretch reads ITALARYKKLRNLTN. The chain crosses the membrane as a helical span at residues 99–119; that stretch reads LLIANLAISDFLVAIVCCPFE. The Extracellular segment spans residues 120-145; it reads MDYYVVRQLSWEHGHVLCASVNYLRT. C137 and C217 are oxidised to a cystine. Residues 146-166 form a helical membrane-spanning segment; the sequence is VSLYVSTNALLAIAIDRYLAI. Residues 167-179 are Cytoplasmic-facing; the sequence is VHPLRPRMKCQTA. Residues 180-200 traverse the membrane as a helical segment; the sequence is AGLIFLVWSVSILIAIPAAYF. Residues 201–232 lie on the Extracellular side of the membrane; sequence TTETVLVIVESQEKIFCGQIWPVDQQFYYRSY. The chain crosses the membrane as a helical span at residues 233–253; the sequence is FLLVFGLEFVGPVIAMTLCYA. Topologically, residues 254–282 are cytoplasmic; the sequence is RVSRELWFKAVPGFQTEQIRRRLRCRRRT. The chain crosses the membrane as a helical span at residues 283–303; the sequence is VLGLVCVLSAYVLCWAPFYGF. Topologically, residues 304-322 are extracellular; the sequence is TIVRDFFPSVFVKEKHYLT. The chain crosses the membrane as a helical span at residues 323–343; sequence AFYVVECIAMSNSMINTLCFV. At 344–393 the chain is on the cytoplasmic side; sequence TVRNNTSKYLKRILRLQWRASPSGSKASADLDLRTTGIPATEEVDCIRLK.

This sequence belongs to the G-protein coupled receptor 1 family. In terms of tissue distribution, widely expressed in peripheral tissues with the highest level in the spleen and moderate levels in the adipose tissues, thymus, lung, kidney, testis, uterus and small intestine.

It localises to the cell membrane. In terms of biological role, receptor for prokineticin 1. Exclusively coupled to the G(q) subclass of heteromeric G proteins. Activation leads to mobilization of calcium, stimulation of phosphoinositide turnover and activation of p44/p42 mitogen-activated protein kinase. May play a role during early pregnancy. The chain is Prokineticin receptor 1 (Prokr1) from Rattus norvegicus (Rat).